A 117-amino-acid chain; its full sequence is Hemerythrin subunit beta (117 aa).

Fe cation-binding residues include His24, His53, Glu57, His72, His76, His105, and Asp110.

This sequence belongs to the hemerythrin family. Octamer composed of two types of chains: alpha and beta.

In terms of biological role, hemerythrin is a respiratory protein in blood cells of certain marine worms. The oxygen-binding site in each chain contains two iron atoms. The sequence is that of Hemerythrin subunit beta from Lingula reevii (Inarticulated brachiopod).